Here is a 494-residue protein sequence, read N- to C-terminus: Probable cytosol aminopeptidase (494 aa).

The Mn(2+) site is built by Lys260 and Asp265. Residue Lys272 is part of the active site. 3 residues coordinate Mn(2+): Asp283, Asp342, and Glu344. The active site involves Arg346.

The protein belongs to the peptidase M17 family. Requires Mn(2+) as cofactor.

It localises to the cytoplasm. The catalysed reaction is Release of an N-terminal amino acid, Xaa-|-Yaa-, in which Xaa is preferably Leu, but may be other amino acids including Pro although not Arg or Lys, and Yaa may be Pro. Amino acid amides and methyl esters are also readily hydrolyzed, but rates on arylamides are exceedingly low.. It carries out the reaction Release of an N-terminal amino acid, preferentially leucine, but not glutamic or aspartic acids.. Presumably involved in the processing and regular turnover of intracellular proteins. Catalyzes the removal of unsubstituted N-terminal amino acids from various peptides. This chain is Probable cytosol aminopeptidase, found in Bacillus cereus (strain ATCC 14579 / DSM 31 / CCUG 7414 / JCM 2152 / NBRC 15305 / NCIMB 9373 / NCTC 2599 / NRRL B-3711).